The primary structure comprises 255 residues: Phosphoribosyl isomerase A (255 aa).

Aspartate 21 functions as the Proton acceptor in the catalytic mechanism. Aspartate 140 serves as the catalytic Proton donor.

It belongs to the HisA/HisF family.

The protein localises to the cytoplasm. The enzyme catalyses 1-(5-phospho-beta-D-ribosyl)-5-[(5-phospho-beta-D-ribosylamino)methylideneamino]imidazole-4-carboxamide = 5-[(5-phospho-1-deoxy-D-ribulos-1-ylimino)methylamino]-1-(5-phospho-beta-D-ribosyl)imidazole-4-carboxamide. It catalyses the reaction N-(5-phospho-beta-D-ribosyl)anthranilate = 1-(2-carboxyphenylamino)-1-deoxy-D-ribulose 5-phosphate. Its pathway is amino-acid biosynthesis; L-histidine biosynthesis; L-histidine from 5-phospho-alpha-D-ribose 1-diphosphate: step 4/9. It functions in the pathway amino-acid biosynthesis; L-tryptophan biosynthesis; L-tryptophan from chorismate: step 3/5. Its function is as follows. Involved in both the histidine and tryptophan biosynthetic pathways. The protein is Phosphoribosyl isomerase A of Mycolicibacterium vanbaalenii (strain DSM 7251 / JCM 13017 / BCRC 16820 / KCTC 9966 / NRRL B-24157 / PYR-1) (Mycobacterium vanbaalenii).